Reading from the N-terminus, the 342-residue chain is D-erythrose-4-phosphate dehydrogenase (342 aa).

Residue 12 to 13 (RI) coordinates NAD(+). Substrate is bound by residues 154–156 (SCT), Arg200, 213–214 (TK), and Arg236. Cys155 functions as the Nucleophile in the catalytic mechanism. Asn318 contributes to the NAD(+) binding site.

Belongs to the glyceraldehyde-3-phosphate dehydrogenase family. Epd subfamily. As to quaternary structure, homotetramer.

Its subcellular location is the cytoplasm. The enzyme catalyses D-erythrose 4-phosphate + NAD(+) + H2O = 4-phospho-D-erythronate + NADH + 2 H(+). It functions in the pathway cofactor biosynthesis; pyridoxine 5'-phosphate biosynthesis; pyridoxine 5'-phosphate from D-erythrose 4-phosphate: step 1/5. Its function is as follows. Catalyzes the NAD-dependent conversion of D-erythrose 4-phosphate to 4-phosphoerythronate. In Klebsiella pneumoniae (strain 342), this protein is D-erythrose-4-phosphate dehydrogenase.